The primary structure comprises 150 residues: Large ribosomal subunit protein bL9 (150 aa).

The protein belongs to the bacterial ribosomal protein bL9 family.

Its function is as follows. Binds to the 23S rRNA. The chain is Large ribosomal subunit protein bL9 from Delftia acidovorans (strain DSM 14801 / SPH-1).